A 175-amino-acid chain; its full sequence is Peptide deformylase (175 aa).

The Fe cation site is built by C96 and H138. The active site involves E139. A Fe cation-binding site is contributed by H142.

The protein belongs to the polypeptide deformylase family. Fe(2+) is required as a cofactor.

It catalyses the reaction N-terminal N-formyl-L-methionyl-[peptide] + H2O = N-terminal L-methionyl-[peptide] + formate. Its function is as follows. Removes the formyl group from the N-terminal Met of newly synthesized proteins. Requires at least a dipeptide for an efficient rate of reaction. N-terminal L-methionine is a prerequisite for activity but the enzyme has broad specificity at other positions. In Rhodopseudomonas palustris (strain BisB5), this protein is Peptide deformylase.